The primary structure comprises 127 residues: Fluoride-specific ion channel FluC 2 (127 aa).

Helical transmembrane passes span Ile4–Leu24, Phe31–Leu51, Ile62–Phe82, and Val94–Gly114. 2 residues coordinate Na(+): Gly72 and Thr75.

This sequence belongs to the fluoride channel Fluc/FEX (TC 1.A.43) family.

Its subcellular location is the cell membrane. It carries out the reaction fluoride(in) = fluoride(out). Na(+) is not transported, but it plays an essential structural role and its presence is essential for fluoride channel function. Fluoride-specific ion channel. Important for reducing fluoride concentration in the cell, thus reducing its toxicity. This is Fluoride-specific ion channel FluC 2 from Lactiplantibacillus plantarum (strain ATCC BAA-793 / NCIMB 8826 / WCFS1) (Lactobacillus plantarum).